A 348-amino-acid chain; its full sequence is Lipopolysaccharide heptosyltransferase 2 (348 aa).

This sequence belongs to the glycosyltransferase 9 family.

The enzyme catalyses an L-alpha-D-Hep-(1-&gt;5)-[alpha-Kdo-(2-&gt;4)]-alpha-Kdo-(2-&gt;6)-lipid A + ADP-L-glycero-beta-D-manno-heptose = an L-alpha-D-Hep-(1-&gt;3)-L-alpha-D-Hep-(1-&gt;5)-[alpha-Kdo-(2-&gt;4)]-alpha-Kdo-(2-&gt;6)-lipid A + ADP + H(+). It catalyses the reaction L-alpha-D-Hep-(1-&gt;5)-[alpha-Kdo-(2-&gt;4)]-alpha-Kdo-(2-&gt;6)-lipid A (E. coli) + ADP-L-glycero-beta-D-manno-heptose = L-alpha-D-Hep-(1-&gt;3)-L-alpha-D-Hep-(1-&gt;5)-[alpha-Kdo-(2-&gt;4)]-alpha-Kdo-(2-&gt;6)-lipid A (E. coli) + ADP + H(+). Its pathway is bacterial outer membrane biogenesis; LPS core biosynthesis. In terms of biological role, glycosyltransferase involved in the biosynthesis of the core oligosaccharide region of lipopolysaccharide (LPS). Catalyzes the addition of the second heptose unit to the heptosyl-Kdo2-lipid A module. The analog ADP-mannose can serve as an alternative donor in place of ADP-L-glycero-D-manno-heptose, but with lower efficiency. The sequence is that of Lipopolysaccharide heptosyltransferase 2 from Escherichia coli (strain K12).